Consider the following 127-residue polypeptide: Large ribosomal subunit protein bL20 (127 aa).

Belongs to the bacterial ribosomal protein bL20 family.

In terms of biological role, binds directly to 23S ribosomal RNA and is necessary for the in vitro assembly process of the 50S ribosomal subunit. It is not involved in the protein synthesizing functions of that subunit. This chain is Large ribosomal subunit protein bL20, found in Corynebacterium jeikeium (strain K411).